A 312-amino-acid chain; its full sequence is MAEFEDQLVFNSISARALKAYFTAKINEMVDELVTRKCPQKKKSQAKKPELRIPVDLVKSSFVKKFGLCNYGGILISLINSLVENNFFTKDGKLDDTGKKELVLTDVEKRILNTIDKSSPLYIDISDVKVLAARLKRSATQFNFNGHTYHLENDKIEDLINQLVKDESIQLDEKSSIKDSMYVIPDELIDVLKTRLFRSPQVKDNIISRTRLYDYFTRVTKRDESSIYVILKDPRIASILSLETVKMGAFMYTKHSMLTNAISSRVDRYSKKFQESFYEDIVEFVKENERVNVSRVVECLTVPNITISSNAE.

This sequence belongs to the orthopoxvirus OPG077 family.

The protein localises to the virion. Functionally, DNA-binding protein which binds to the hairpin form of the viral telomeric sequence. Required for the production of mature virions (MV). This chain is Telomere-binding protein OPG077 (OPG077), found in Vaccinia virus (strain Ankara) (VACV).